The chain runs to 419 residues: eIF5-mimic protein 2 (419 aa).

Residue M1 is modified to N-acetylmethionine. Over residues 1–15 (MNNQKQQKPTLSGQR) the composition is skewed to polar residues. Positions 1–26 (MNNQKQQKPTLSGQRFKTRKRDEKER) are disordered. Position 12 is a phosphoserine (S12). Residues 247–414 (NQQTIGARKE…KNAEEESESE (168 aa)) enclose the W2 domain. K368 is covalently cross-linked (Glycyl lysine isopeptide (Lys-Gly) (interchain with G-Cter in SUMO2)). A phosphoserine mark is found at S411 and S413.

This sequence belongs to the BZW family.

Translation initiation regulator which represses repeat-associated non-AUG (RAN) initiated translation probably by acting as a competitive inhibitor of eukaryotic translation initiation factor 5 (EIF5) function. Enhances histone H4 gene transcription but does not seem to bind DNA directly. This is eIF5-mimic protein 2 (BZW1) from Homo sapiens (Human).